Here is a 393-residue protein sequence, read N- to C-terminus: Lipid-A-disaccharide synthase (393 aa).

This sequence belongs to the LpxB family.

The catalysed reaction is a lipid X + a UDP-2-N,3-O-bis[(3R)-3-hydroxyacyl]-alpha-D-glucosamine = a lipid A disaccharide + UDP + H(+). The protein operates within bacterial outer membrane biogenesis; LPS lipid A biosynthesis. In terms of biological role, condensation of UDP-2,3-diacylglucosamine and 2,3-diacylglucosamine-1-phosphate to form lipid A disaccharide, a precursor of lipid A, a phosphorylated glycolipid that anchors the lipopolysaccharide to the outer membrane of the cell. This Colwellia psychrerythraea (strain 34H / ATCC BAA-681) (Vibrio psychroerythus) protein is Lipid-A-disaccharide synthase.